The following is a 477-amino-acid chain: MKILFVAAEGAPFSKTGGLGDVIGALPKSLVKAGHEVAVILPYYDMVEAKFGNQIEDVLHFEVSVGWRRQYCGIKKTVLNGVTFYFIDNQYYFFRGHVYGDFDDGERFAFFQLAAIEAMERIDFIPDLLHVHDYHTAMIPFLLKEKYCWIQAYEDIETVLTIHNLEFQGQFSEGMLGDLFGVGLERYADGTLRWNNCLNWMKAGILYANRVSTVSPSYAHEIMTSQFGCNLDQILKMESGKVSGIVNGIDADLYNPQTDALLDYHFNQEDLSGKAKNKAKLQERVGLPVRADVPLVGIVSRLTRQKGFDVVVESLHHILQEDVQIVLLGTGDPAFEGAFSWFAQIYPDKLSANITFDVKLAQEIYAACDLFLMPSRFEPCGLSQMMAMRYGTLPLVHEVGGLRDTVRAFNPIEGSGTGFSFDNLSPYWLNWTFQTALDLYRNHPDIWRNLQKQAMESDFSWDTACKSYLDLYHSLVN.

K15 serves as a coordination point for ADP-alpha-D-glucose.

It belongs to the glycosyltransferase 1 family. Bacterial/plant glycogen synthase subfamily.

The enzyme catalyses [(1-&gt;4)-alpha-D-glucosyl](n) + ADP-alpha-D-glucose = [(1-&gt;4)-alpha-D-glucosyl](n+1) + ADP + H(+). The protein operates within glycan biosynthesis; glycogen biosynthesis. Its function is as follows. Synthesizes alpha-1,4-glucan chains using ADP-glucose. In Streptococcus pneumoniae (strain JJA), this protein is Glycogen synthase.